Here is a 228-residue protein sequence, read N- to C-terminus: Cytochrome c oxidase subunit 2 (228 aa).

Residues 1–26 (MATWNNLNLQNGASPLMEQIIFFHDH) lie on the Mitochondrial intermembrane side of the membrane. A helical membrane pass occupies residues 27–48 (TLIILIMITILVGYLMINLFFN). The Mitochondrial matrix segment spans residues 49 to 62 (KYINRFLLEGQMIE). Residues 63 to 82 (LIWTILPAITLIFIALPSLR) form a helical membrane-spanning segment. Topologically, residues 83-228 (LLYLLDELNN…FIKWINNYSS (146 aa)) are mitochondrial intermembrane. 6 residues coordinate Cu cation: histidine 161, cysteine 196, glutamate 198, cysteine 200, histidine 204, and methionine 207. Glutamate 198 is a Mg(2+) binding site.

Belongs to the cytochrome c oxidase subunit 2 family. Component of the cytochrome c oxidase (complex IV, CIV), a multisubunit enzyme composed of a catalytic core of 3 subunits and several supernumerary subunits. The complex exists as a monomer or a dimer and forms supercomplexes (SCs) in the inner mitochondrial membrane with ubiquinol-cytochrome c oxidoreductase (cytochrome b-c1 complex, complex III, CIII). The cofactor is Cu cation.

It localises to the mitochondrion inner membrane. It catalyses the reaction 4 Fe(II)-[cytochrome c] + O2 + 8 H(+)(in) = 4 Fe(III)-[cytochrome c] + 2 H2O + 4 H(+)(out). Its function is as follows. Component of the cytochrome c oxidase, the last enzyme in the mitochondrial electron transport chain which drives oxidative phosphorylation. The respiratory chain contains 3 multisubunit complexes succinate dehydrogenase (complex II, CII), ubiquinol-cytochrome c oxidoreductase (cytochrome b-c1 complex, complex III, CIII) and cytochrome c oxidase (complex IV, CIV), that cooperate to transfer electrons derived from NADH and succinate to molecular oxygen, creating an electrochemical gradient over the inner membrane that drives transmembrane transport and the ATP synthase. Cytochrome c oxidase is the component of the respiratory chain that catalyzes the reduction of oxygen to water. Electrons originating from reduced cytochrome c in the intermembrane space (IMS) are transferred via the dinuclear copper A center (CU(A)) of subunit 2 and heme A of subunit 1 to the active site in subunit 1, a binuclear center (BNC) formed by heme A3 and copper B (CU(B)). The BNC reduces molecular oxygen to 2 water molecules using 4 electrons from cytochrome c in the IMS and 4 protons from the mitochondrial matrix. This Yponomeuta malinellus (European small ermine moth) protein is Cytochrome c oxidase subunit 2 (COII).